We begin with the raw amino-acid sequence, 389 residues long: Putative DNA processing protein DprA (389 aa).

It belongs to the DprA/Smf family.

May help load RecA onto ssDNA. The protein is Putative DNA processing protein DprA of Mycobacterium tuberculosis (strain CDC 1551 / Oshkosh).